Here is a 253-residue protein sequence, read N- to C-terminus: MMPILVTLNKISVTFGSRRVLNDISLSLRPGKILTLLGPNGAGKSTLVRVVLGLIPPSSGSLVREPGLRIGYVPQKLHLDATLPLTVSRFMRLKPGVKKADILPALTRVQAAHLLDQPMQKLSGGENQRVLLARALLNRPQLLVLDEPTQGVDVNGQLALYDLIEQLRKELGCAVLMVSHDLHLVMAKTDEVLCLNQHICCSGAPEVVSTHPEFIAMFGNRGAEQLAVYRHNHNHRHDLHGKIILKNSGSRGA.

Positions 6–227 constitute an ABC transporter domain; that stretch reads VTLNKISVTF…FGNRGAEQLA (222 aa). ATP is bound at residue 38 to 45; sequence GPNGAGKS.

It belongs to the ABC transporter superfamily. Zinc importer (TC 3.A.1.15.5) family. As to quaternary structure, the complex is composed of two ATP-binding proteins (ZnuC), two transmembrane proteins (ZnuB) and a solute-binding protein (ZnuA).

The protein localises to the cell inner membrane. The catalysed reaction is Zn(2+)(out) + ATP(in) + H2O(in) = Zn(2+)(in) + ADP(in) + phosphate(in) + H(+)(in). Functionally, part of the ABC transporter complex ZnuABC involved in zinc import. Responsible for energy coupling to the transport system. The polypeptide is Zinc import ATP-binding protein ZnuC (Yersinia pestis bv. Antiqua (strain Antiqua)).